A 560-amino-acid polypeptide reads, in one-letter code: DNA ligase B (560 aa).

K124 acts as the N6-AMP-lysine intermediate in catalysis.

It belongs to the NAD-dependent DNA ligase family. LigB subfamily.

The enzyme catalyses NAD(+) + (deoxyribonucleotide)n-3'-hydroxyl + 5'-phospho-(deoxyribonucleotide)m = (deoxyribonucleotide)n+m + AMP + beta-nicotinamide D-nucleotide.. Its function is as follows. Catalyzes the formation of phosphodiester linkages between 5'-phosphoryl and 3'-hydroxyl groups in double-stranded DNA using NAD as a coenzyme and as the energy source for the reaction. This chain is DNA ligase B, found in Citrobacter koseri (strain ATCC BAA-895 / CDC 4225-83 / SGSC4696).